The sequence spans 607 residues: Glutamyl-tRNA(Gln) amidotransferase subunit E (607 aa).

Residues Gly-399–Glu-428 are disordered.

It belongs to the GatB/GatE family. GatE subfamily. Heterodimer of GatD and GatE.

It catalyses the reaction L-glutamyl-tRNA(Gln) + L-glutamine + ATP + H2O = L-glutaminyl-tRNA(Gln) + L-glutamate + ADP + phosphate + H(+). Its function is as follows. Allows the formation of correctly charged Gln-tRNA(Gln) through the transamidation of misacylated Glu-tRNA(Gln) in organisms which lack glutaminyl-tRNA synthetase. The reaction takes place in the presence of glutamine and ATP through an activated gamma-phospho-Glu-tRNA(Gln). The GatDE system is specific for glutamate and does not act on aspartate. The sequence is that of Glutamyl-tRNA(Gln) amidotransferase subunit E from Pyrobaculum neutrophilum (strain DSM 2338 / JCM 9278 / NBRC 100436 / V24Sta) (Thermoproteus neutrophilus).